A 501-amino-acid polypeptide reads, in one-letter code: Pyruvate dehydrogenase protein X component, mitochondrial (501 aa).

Residues methionine 1–glutamine 53 constitute a mitochondrion transit peptide. The 77-residue stretch at proline 56–valine 132 folds into the Lipoyl-binding domain. An N6-lipoyllysine modification is found at lysine 97. Residues lysine 145–histidine 176 are disordered. Residues alanine 149–proline 169 are compositionally biased toward pro residues. The Peripheral subunit-binding (PSBD) domain maps to arginine 183–valine 220. Residue lysine 194 is modified to N6-acetyllysine. A Phosphoserine modification is found at serine 196. Residues isoleucine 228–proline 256 are disordered. Residue lysine 394 is modified to N6-succinyllysine.

It belongs to the 2-oxoacid dehydrogenase family. As to quaternary structure, part of the inner core of the multimeric pyruvate dehydrogenase complex that is composed of about 48 DLAT and 12 PDHX molecules. This core binds multiple copies of pyruvate dehydrogenase (subunits PDH1A and PDHB, E1), dihydrolipoamide acetyltransferase (DLAT, E2) and lipoamide dehydrogenase (DLD, E3). Interacts with SIRT4. Interacts with DLD. Delipoylated at Lys-97 by SIRT4, delipoylation decreases the PHD complex activity.

It is found in the mitochondrion matrix. Required for anchoring dihydrolipoamide dehydrogenase (E3) to the dihydrolipoamide transacetylase (E2) core of the pyruvate dehydrogenase complexes of eukaryotes. This specific binding is essential for a functional PDH complex. This is Pyruvate dehydrogenase protein X component, mitochondrial (Pdhx) from Mus musculus (Mouse).